The sequence spans 406 residues: Acetate kinase (406 aa).

Asn7 provides a ligand contact to Mg(2+). Lys14 provides a ligand contact to ATP. Arg90 lines the substrate pocket. Asp147 functions as the Proton donor/acceptor in the catalytic mechanism. ATP is bound by residues 207-211 (HLGNG), 283-285 (DMR), and 331-335 (GVGEN). Glu385 provides a ligand contact to Mg(2+).

The protein belongs to the acetokinase family. As to quaternary structure, homodimer. The cofactor is Mg(2+). Mn(2+) serves as cofactor.

The protein localises to the cytoplasm. It catalyses the reaction acetate + ATP = acetyl phosphate + ADP. It participates in metabolic intermediate biosynthesis; acetyl-CoA biosynthesis; acetyl-CoA from acetate: step 1/2. Catalyzes the formation of acetyl phosphate from acetate and ATP. Can also catalyze the reverse reaction. In Thermosipho melanesiensis (strain DSM 12029 / CIP 104789 / BI429), this protein is Acetate kinase.